We begin with the raw amino-acid sequence, 232 residues long: Large ribosomal subunit protein uL1 (232 aa).

Belongs to the universal ribosomal protein uL1 family. As to quaternary structure, part of the 50S ribosomal subunit.

In terms of biological role, binds directly to 23S rRNA. The L1 stalk is quite mobile in the ribosome, and is involved in E site tRNA release. Protein L1 is also a translational repressor protein, it controls the translation of the L11 operon by binding to its mRNA. The protein is Large ribosomal subunit protein uL1 of Bartonella henselae (strain ATCC 49882 / DSM 28221 / CCUG 30454 / Houston 1) (Rochalimaea henselae).